The following is an 83-amino-acid chain: Sec-independent protein translocase protein TatA (83 aa).

Residues 2-22 (GLGGISIWQLLIVLVIVLLLF) traverse the membrane as a helical segment. Composition is skewed to basic and acidic residues over residues 50–65 (AAKQ…KVAA) and 74–83 (AEQKEKTEAK). Residues 50–83 (AAKQEAEEAEQKKVAAEEAAAAKTAEQKEKTEAK) form a disordered region.

It belongs to the TatA/E family. In terms of assembly, the Tat system comprises two distinct complexes: a TatABC complex, containing multiple copies of TatA, TatB and TatC subunits, and a separate TatA complex, containing only TatA subunits. Substrates initially bind to the TatABC complex, which probably triggers association of the separate TatA complex to form the active translocon.

Its subcellular location is the cell inner membrane. Functionally, part of the twin-arginine translocation (Tat) system that transports large folded proteins containing a characteristic twin-arginine motif in their signal peptide across membranes. TatA could form the protein-conducting channel of the Tat system. In Saccharophagus degradans (strain 2-40 / ATCC 43961 / DSM 17024), this protein is Sec-independent protein translocase protein TatA.